A 312-amino-acid polypeptide reads, in one-letter code: DNA-directed RNA polymerase subunit alpha (312 aa).

An alpha N-terminal domain (alpha-NTD) region spans residues 1 to 229 (MLQYQIDRIE…ELFQPLATVT (229 aa)). The segment at 245–312 (QIPLEELNLS…ISIPQSRTSA (68 aa)) is alpha C-terminal domain (alpha-CTD).

This sequence belongs to the RNA polymerase alpha chain family. In terms of assembly, in cyanobacteria the RNAP catalytic core is composed of 2 alpha, 1 beta, 1 beta', 1 gamma and 1 omega subunit. When a sigma factor is associated with the core the holoenzyme is formed, which can initiate transcription.

It carries out the reaction RNA(n) + a ribonucleoside 5'-triphosphate = RNA(n+1) + diphosphate. In terms of biological role, DNA-dependent RNA polymerase catalyzes the transcription of DNA into RNA using the four ribonucleoside triphosphates as substrates. This is DNA-directed RNA polymerase subunit alpha from Prochlorococcus marinus (strain MIT 9313).